Reading from the N-terminus, the 686-residue chain is Gamma-aminobutyric acid receptor alpha-like (686 aa).

An N-terminal signal peptide occupies residues 1-58 (MCTMPATRDASGSGDASTDLIAARSLSSHQGQRSNLRIFKLLISCCLLMLCIYPNAWP). Over 97 to 393 (SSWLTQSNNH…NFHLQRHMGN (297 aa)) the chain is Extracellular. N-linked (GlcNAc...) asparagine glycosylation occurs at N108. Residues C233 and C247 are joined by a disulfide bond. N292 carries N-linked (GlcNAc...) asparagine glycosylation. Transmembrane regions (helical) follow at residues 394–414 (FLIQ…VSFW), 424–441 (VSLG…GLEA), and 456–476 (FFVF…AVVH). The Cytoplasmic portion of the chain corresponds to 477-650 (YYTKYGSGEC…YNSVSKIDRA (174 aa)). Positions 570–641 (KPPRADSDED…RRKGKRTPQY (72 aa)) are disordered. Over residues 586–596 (QLRANEAPTTS) the composition is skewed to polar residues. Residues 597–609 (AAAAAAQAAAQAA) show a composition bias toward low complexity. A helical transmembrane segment spans residues 651–671 (SRIVFPLLFILINVFYWYGYL).

Belongs to the ligand-gated ion channel (TC 1.A.9) family. Gamma-aminobutyric acid receptor (TC 1.A.9.5) subfamily. Generally pentameric. There are five types of GABA(A) receptor chains: alpha, beta, gamma, delta, and rho. Interacts with Lcch3 (beta chain).

It localises to the postsynaptic cell membrane. The protein resides in the cell membrane. Its function is as follows. GABA, an inhibitory neurotransmitter, mediates neuronal inhibition by binding to the GABA receptor and opening an integral chloride channel. May combine with the ligand-gated ion channel subunit Lcch3 to form cation-selective GABA-gated ion channels. This Drosophila melanogaster (Fruit fly) protein is Gamma-aminobutyric acid receptor alpha-like (Grd).